Consider the following 421-residue polypeptide: Imidazolonepropionase (421 aa).

Fe(3+)-binding residues include H81 and H83. Positions 81 and 83 each coordinate Zn(2+). 4-imidazolone-5-propanoate contacts are provided by R90, Y153, and H186. Position 153 (Y153) interacts with N-formimidoyl-L-glutamate. A Fe(3+)-binding site is contributed by H251. H251 lines the Zn(2+) pocket. E254 contacts 4-imidazolone-5-propanoate. D326 provides a ligand contact to Fe(3+). D326 is a Zn(2+) binding site. Positions 328 and 330 each coordinate N-formimidoyl-L-glutamate. A 4-imidazolone-5-propanoate-binding site is contributed by S331.

This sequence belongs to the metallo-dependent hydrolases superfamily. HutI family. Requires Zn(2+) as cofactor. The cofactor is Fe(3+).

The protein resides in the cytoplasm. The catalysed reaction is 4-imidazolone-5-propanoate + H2O = N-formimidoyl-L-glutamate. It participates in amino-acid degradation; L-histidine degradation into L-glutamate; N-formimidoyl-L-glutamate from L-histidine: step 3/3. Its function is as follows. Catalyzes the hydrolytic cleavage of the carbon-nitrogen bond in imidazolone-5-propanoate to yield N-formimidoyl-L-glutamate. It is the third step in the universal histidine degradation pathway. The sequence is that of Imidazolonepropionase from Streptococcus pyogenes serotype M3 (strain SSI-1).